The primary structure comprises 514 residues: 2,3-bisphosphoglycerate-independent phosphoglycerate mutase (514 aa).

Residues D14 and S64 each coordinate Mn(2+). Catalysis depends on S64, which acts as the Phosphoserine intermediate. Substrate is bound by residues H125, 155–156 (RD), R187, R193, 263–266 (RADR), and K336. Mn(2+) is bound by residues D403, H407, D444, H445, and H463.

This sequence belongs to the BPG-independent phosphoglycerate mutase family. As to quaternary structure, monomer. Requires Mn(2+) as cofactor.

It carries out the reaction (2R)-2-phosphoglycerate = (2R)-3-phosphoglycerate. It participates in carbohydrate degradation; glycolysis; pyruvate from D-glyceraldehyde 3-phosphate: step 3/5. In terms of biological role, catalyzes the interconversion of 2-phosphoglycerate and 3-phosphoglycerate. This Shewanella baltica (strain OS185) protein is 2,3-bisphosphoglycerate-independent phosphoglycerate mutase.